Consider the following 160-residue polypeptide: MHTKAVYPGTFDPITNGHADLIERAANMFAHVIVGIAANPSKKPLFSLQERVDLIKEVTEHLPNVEVIGFEGLLADFADSQGATVLIRGLRAVSDFEYEFQLANMNRRLNPNLESIFLTPAEENSFISSTLVKEVALHRGKVDQFCHPAVQAALKEKLQQ.

T10 is a binding site for substrate. Residues 10 to 11 and H18 each bind ATP; that span reads TF. Substrate contacts are provided by K42, L74, and R88. ATP contacts are provided by residues 89–91, E99, and 124–130; these read GLR and NSFISST.

This sequence belongs to the bacterial CoaD family. Homohexamer. Requires Mg(2+) as cofactor.

It is found in the cytoplasm. It catalyses the reaction (R)-4'-phosphopantetheine + ATP + H(+) = 3'-dephospho-CoA + diphosphate. It participates in cofactor biosynthesis; coenzyme A biosynthesis; CoA from (R)-pantothenate: step 4/5. Reversibly transfers an adenylyl group from ATP to 4'-phosphopantetheine, yielding dephospho-CoA (dPCoA) and pyrophosphate. The protein is Phosphopantetheine adenylyltransferase of Pseudoalteromonas atlantica (strain T6c / ATCC BAA-1087).